Reading from the N-terminus, the 551-residue chain is Tetrachloroethene reductive dehalogenase (551 aa).

The tat-type signal signal peptide spans 1 to 39; that stretch reads MGEINRRNFLKVSILGAAAAAVASASAVKGMVSPLVADA. Residues 411–440 enclose the 4Fe-4S ferredoxin-type 1 domain; it reads PRKFGVREFCRLCKKCADACPAQAISHEKD. Cys-420, Cys-423, Cys-426, Cys-430, Cys-467, Cys-478, Cys-481, and Cys-485 together coordinate [4Fe-4S] cluster. Residues 478–496 enclose the 4Fe-4S ferredoxin-type 2 domain; it reads CSNCVAVCSWNKVETWNHD.

This sequence belongs to the PceA family. Requires [4Fe-4S] cluster as cofactor. Corrinoid serves as cofactor. In terms of processing, predicted to be exported by the Tat system. The position of the signal peptide cleavage has been experimentally proven.

It localises to the cytoplasm. The protein localises to the cell membrane. Its subcellular location is the secreted. The enzyme catalyses trichloroethene + chloride + A + H(+) = tetrachloroethene + AH2. The catalysed reaction is trichloroethene + AH2 = (Z)-1,2-dichloroethene + chloride + A + H(+). With respect to regulation, pceT is required as a chaperone for prePceA maturation. In the absence or presence of exogenous vitamin B12, the intracellular corrinoid level decreases in fumarate-grown cells and the PceA precursor forms catalytically inactive, corrinoid-free multiprotein aggregates. Exogenous vitamin B12 is not incorporated into the PceA precursor, even though it affects the transposition of the pce gene cluster. Catalyzes the reductive dechlorination of tetrachloroethene (PCE) to trichloroethene (TCE) and of trichloroethene to cis-1,2-dichloroethene (DCE). Can also use various chlorinated ethanes such as tetrachloroethane, pentachloroethane and hexachloroethane. Reduced methyl viologen can act as the artificial electron donor. In Desulfitobacterium hafniense (strain Y51), this protein is Tetrachloroethene reductive dehalogenase.